A 24-amino-acid chain; its full sequence is Heat shock 70 kDa protein 4L (24 aa).

Residue Thr-19 is modified to Phosphothreonine.

This sequence belongs to the heat shock protein 70 family. Homodimer. In the testis, forms a complex with p53 at 32.5 degrees Celsius which is scrotal temperature but not at 37 or 42 degrees Celsius. Expressed at high levels in testis and at much lower levels in brain. In testis, expressed mainly in germ cells. Widespread in brain with highest expression in cerebellum and medulla oblongata. Also expressed in renal medulla of water-restricted animals.

It localises to the cytoplasm. It is found in the nucleus. In terms of biological role, possesses chaperone activity in vitro where it inhibits aggregation of citrate synthase. This Rattus norvegicus (Rat) protein is Heat shock 70 kDa protein 4L (Hspa4l).